We begin with the raw amino-acid sequence, 165 residues long: Lipoprotein signal peptidase (165 aa).

3 consecutive transmembrane segments (helical) span residues 9 to 29, 65 to 85, and 97 to 119; these read PFLW…LAVV, WQKY…LFFL, and TGYA…HGFV. Active-site residues include Asp-121 and Asp-139. A helical transmembrane segment spans residues 134–154; it reads VFNVADIAICIGAGLLAIDAF.

Belongs to the peptidase A8 family.

The protein localises to the cell inner membrane. The catalysed reaction is Release of signal peptides from bacterial membrane prolipoproteins. Hydrolyzes -Xaa-Yaa-Zaa-|-(S,diacylglyceryl)Cys-, in which Xaa is hydrophobic (preferably Leu), and Yaa (Ala or Ser) and Zaa (Gly or Ala) have small, neutral side chains.. It functions in the pathway protein modification; lipoprotein biosynthesis (signal peptide cleavage). Functionally, this protein specifically catalyzes the removal of signal peptides from prolipoproteins. The polypeptide is Lipoprotein signal peptidase (Histophilus somni (strain 2336) (Haemophilus somnus)).